Reading from the N-terminus, the 1206-residue chain is Methionine synthase (1206 aa).

The 314-residue stretch at 1–314 (MRVTAANQHQ…DHIREVAAAV (314 aa)) folds into the Hcy-binding domain. The Zn(2+) site is built by Cys233, Cys299, and Cys300. The region spanning 350 to 609 (VLMIGERTNA…IPEEQRQAAL (260 aa)) is the Pterin-binding domain. The 94-residue stretch at 642–735 (REAELAKLPL…HMEKSDCDFG (94 aa)) folds into the B12-binding N-terminal domain. One can recognise a B12-binding domain in the interval 740-877 (KGRIVLATVK…SAKRGEALAP (138 aa)). Methylcob(III)alamin-binding positions include 750–754 (GDVHD), His753, Ser798, and Ala856. Residues 873-925 (EALAPGSPESLAAEADRNKETERKARHERSKRIAVQRKAAEEPVEVPERSDVP) are disordered. Residues 886 to 897 (EADRNKETERKA) are compositionally biased toward basic and acidic residues. The span at 898–907 (RHERSKRIAV) shows a compositional bias: basic residues. The AdoMet activation domain maps to 907–1206 (VQRKAAEEPV…HHPAAKYFNV (300 aa)). Basic and acidic residues predominate over residues 910–924 (KAAEEPVEVPERSDV). S-adenosyl-L-methionine contacts are provided by residues Asp954, Arg1149, and 1203–1204 (YF).

This sequence belongs to the vitamin-B12 dependent methionine synthase family. The cofactor is methylcob(III)alamin. Zn(2+) is required as a cofactor.

It catalyses the reaction (6S)-5-methyl-5,6,7,8-tetrahydrofolate + L-homocysteine = (6S)-5,6,7,8-tetrahydrofolate + L-methionine. It participates in amino-acid biosynthesis; L-methionine biosynthesis via de novo pathway; L-methionine from L-homocysteine (MetH route): step 1/1. Its function is as follows. Catalyzes the transfer of a methyl group from methyl-cobalamin to homocysteine, yielding enzyme-bound cob(I)alamin and methionine. Subsequently, remethylates the cofactor using methyltetrahydrofolate. The chain is Methionine synthase (metH) from Mycobacterium leprae (strain TN).